The chain runs to 776 residues: Cullin-1 (776 aa).

Position 63 is an omega-N-methylarginine (Arg-63). One can recognise a Cullin neddylation domain in the interval 706–766 (DRKLLIQAAI…IEKEYLERVD (61 aa)). Lys-720 is covalently cross-linked (Glycyl lysine isopeptide (Lys-Gly) (interchain with G-Cter in NEDD8)).

This sequence belongs to the cullin family. In terms of assembly, component of multiple Cul1-RING E3 ubiquitin-protein ligase complexes commonly known as SCF (SKP1-CUL1-F-box) complexes, consisting of CUL1, SKP1, RBX1 and a variable F-box domain-containing protein as substrate-specific subunit. Component of the SCF(FBXW11) complex containing FBXW11. Component of the SCF(SKP2) complex containing SKP2, in which it interacts directly with SKP1, SKP2 and RBX1. Component of the SCF(FBXW2) complex containing FBXW2. Component of the SCF(FBXO32) complex containing FBXO32. Component of the probable SCF(FBXO7) complex containing FBXO7. Component of the SCF(FBXO10) complex containing FBXO10. Component of the SCF(FBXO11) complex containing FBXO11. Component of the SCF(FBXO25) complex containing FBXO25. Component of the SCF(FBXO33) complex containing FBXO33. Component of the probable SCF(FBXO4) complex containing FBXO4. Component of the SCF(FBXO44) complex, composed of SKP1, CUL1 and FBXO44. Component of the SCF(BTRC) complex, composed of SKP1, CUL1 and BTRC. This complex binds phosphorylated NFKBIA. Part of a SCF complex consisting of CUL1, RBX1, SKP1 and FBXO2. Component of a SCF(SKP2)-like complex containing CUL1, SKP1, TRIM21 and SKP2. Component of the SCF(FBXO17) complex, composed of SKP1, CUL1 and FBXO17. Component of the SCF(FBXO27) complex, composed of SKP1, CUL1 and FBXO27. Component of the SCF(CCNF) complex consisting of CUL1, RBX1, SKP1 and CCNF. Interacts with CCNF. Component of the SCF(FBXL3) complex composed of CUL1, SKP1, RBX1 and FBXL3. Component of the SCF(FBXL21) complex composed of CUL1, SKP1, RBX1 and FBXL21. Component of the SCF(FBXO9) composed of CUL1, SKP1, RBX1 and FBXO9. Component of the SCF(FBXW7) composed of CUL1, SKP1, RBX1 and FBXW7. Component of the SCF(FBXO31) complex composed of CUL1, SKP1, RBX1 and FBXO31. Interacts with CHEK2; mediates CHEK2 ubiquitination and regulates its function. Part of a complex with TIP120A/CAND1 and RBX1. The unneddylated form interacts with TIP120A/CAND1 and the interaction mediates the exchange of the F-box substrate-specific subunit. Can self-associate. Interacts with FBXW8. Interacts with RNF7. Interacts with TRIM21. Interacts with COPS2. Interacts with DCUN1D1 and UBE2M. Interacts with DCUN1D3. Interacts with DCUN1D4. Identified in a complex with RBX1 and GLMN. Interacts with CEP68 as part of the SCF(FBXW11) complex; the interaction is probably mediated by FBXW11 and the complex also contains CDK5RAP2 and PCNT. Interacts (when neddylated) with ARIH1; leading to activate the E3 ligase activity of ARIH1. Interacts with COPS9. Interacts with UBXN1. Interacts with KAT7, probably as part of an SCF complex; the interaction mediates KAT7 ubiquitination. Interacts with NOTCH2. Part of a complex that contains DCUN1D5, CUL1 and RBX1; this interaction is bridged by CUL1. Interacts (unneddylated form) with DCUN1D1, DCUN1D2, DCUN1D3, DCUN1D4 and DCUN1D5; these interactions promote the cullin neddylation. Interacts (via the C-terminal domain) with CUL7; the interaction seems to be mediated by FBXW8; it is likely specific to FBXW8, but not other F-box proteins. Interacts with UBR2, as part of SCF(BTRC) complex; the interaction mediates 'Lys-48'-linked ubiquitination of UBR2 and is regulated by DUSP22 in the T-cell receptor signaling pathway. (Microbial infection) Interacts with murine cytomegalovirus M48. Post-translationally, neddylated; which enhances the ubiquitination activity of SCF. Neddylation prevents binding of the inhibitor CAND1. Neddylation leads to structural rearrangment in the complex that allows interaction between the E2 ubiquitin-conjugating enzyme and the acceptor ubiquitin. Deneddylated via its interaction with the COP9 signalosome (CSN) complex. (Microbial infection) Deneddylated by murine cytomegalovirus M48 leading to a S-phase-like environment that is required for efficient replication of the viral genome. In terms of tissue distribution, embryo fibroblasts and embryo preadipocytes.

It participates in protein modification; protein ubiquitination. Functionally, core component of multiple cullin-RING-based SCF (SKP1-CUL1-F-box protein) E3 ubiquitin-protein ligase complexes, which mediate the ubiquitination of proteins involved in cell cycle progression, signal transduction and transcription. SCF complexes and ARIH1 collaborate in tandem to mediate ubiquitination of target proteins. In the SCF complex, serves as a rigid scaffold that organizes the SKP1-F-box protein and RBX1 subunits. May contribute to catalysis through positioning of the substrate and the ubiquitin-conjugating enzyme. The E3 ubiquitin-protein ligase activity of the complex is dependent on the neddylation of the cullin subunit and exchange of the substrate recognition component is mediated by TIP120A/CAND1. The functional specificity of the SCF complex depends on the F-box protein as substrate recognition component. SCF(BTRC) and SCF(FBXW11) direct ubiquitination of CTNNB1 and participate in Wnt signaling. SCF(FBXW11) directs ubiquitination of phosphorylated NFKBIA. SCF(BTRC) directs ubiquitination of NFKBIB, NFKBIE, ATF4, SMAD3, SMAD4, CDC25A, FBXO5 and probably NFKB2. SCF(BTRC) and/or SCF(FBXW11) direct ubiquitination of CEP68. SCF(SKP2) directs ubiquitination of phosphorylated CDKN1B/p27kip and is involved in regulation of G1/S transition. SCF(SKP2) directs ubiquitination of ORC1, CDT1, RBL2, ELF4, CDKN1A, RAG2, FOXO1A, and probably MYC and TAL1. SCF(FBXW7) directs ubiquitination of cyclin E, NOTCH1 released notch intracellular domain (NICD), and probably PSEN1. SCF(FBXW2) directs ubiquitination of GCM1. SCF(FBXO32) directs ubiquitination of MYOD1. SCF(FBXO7) directs ubiquitination of BIRC2 and DLGAP5. SCF(FBXO33) directs ubiquitination of YBX1. SCF(FBXO1) directs ubiquitination of BCL6 and DTL but does not seem to direct ubiquitination of TP53. SCF(BTRC) mediates the ubiquitination of NFKBIA at 'Lys-21' and 'Lys-22'; the degradation frees the associated NFKB1-RELA dimer to translocate into the nucleus and to activate transcription. SCF(CCNF) directs ubiquitination of CCP110. SCF(FBXL3) and SCF(FBXL21) direct ubiquitination of CRY1 and CRY2. SCF(FBXO9) directs ubiquitination of TTI1 and TELO2. SCF(FBXO10) directs ubiquitination of BCL2. Neddylated CUL1-RBX1 ubiquitinates p53/TP53 recruited by Cul7-RING(FBXW8) complex. SCF(BTRC) directs 'Lys-48'-linked ubiquitination of UBR2 in the T-cell receptor signaling pathway. The SCF(FBXO31) protein ligase complex specifically mediates the ubiquitination of proteins amidated at their C-terminus in response to oxidative stress. This chain is Cullin-1 (Cul1), found in Mus musculus (Mouse).